Here is a 276-residue protein sequence, read N- to C-terminus: Caspase-6 (276 aa).

A propeptide spanning residues 1-5 (MTETD) is cleaved from the precursor. The interval 25–27 (KRR) is tri-arginine exosite. Phosphoserine is present on serine 62. Histidine 104 is an active-site residue. The interval 108–125 (NHVYAYDAKIEIQTLTGL) is 130's region. Residue cysteine 146 is part of the active site. A propeptide spanning residues 163 to 175 (HQTDKLDNVTQVD) is cleaved from the precursor. Serine 239 bears the Phosphoserine mark. S-palmitoyl cysteine attachment occurs at residues cysteine 246 and cysteine 259.

Belongs to the peptidase C14A family. As to quaternary structure, heterotetramer that consists of two anti-parallel arranged heterodimers, each one formed by a 18 kDa (p18) and a 11 kDa (p11) subunit. Interacts with BIRC6/bruce. Interacts with RIPK3. Heterotetramer that consists of two anti-parallel arranged heterodimers, each one formed by a 18 kDa (Caspase-6 subunit p18) and a 11 kDa (Caspase-6 subunit p11) subunit. Phosphorylated by NUAK1; phosphorylation inhibits self-activation. Phosphorylation at Ser-239 by AMP-activated protein kinase (PRKAA1 or PRKAA2) inhibits autocleavage, preventing caspase activation, thereby preventing hepatocyte apoptosis. Post-translationally, palmitoylation by ZDHHC17 blocks dimerization and subsequent activation, leading to inhibit the cysteine protease activity. In terms of processing, can be cleaved and activated by different caspases, depending on the context. Cleaved and activated by caspase-8 (CASP8) and subsequently by caspase-3 (CASP3). Can also undergo autoactivation by mediating autocleavage at Asp-162 and Asp-175, while it is not able to cleave its N-terminal disordered prodomain. Cleaved and activated by CASP1, possibly in the context of inflammation. As to expression, highly expressed in lung, liver, kidney, testis, and heart. Lower levels in spleen, skeletal muscle and brain. Expressed in neurons.

The protein resides in the cytoplasm. The protein localises to the nucleus. The enzyme catalyses Strict requirement for Asp at position P1 and has a preferred cleavage sequence of Val-Glu-His-Asp-|-.. Its activity is regulated as follows. During activation, the N-terminal disordered prodomain is removed by cleavage. Concomitantly, double cleavage gives rise to a large 18-kDa and a small 11-kDa subunit. The two large and two small subunits then assemble to form the active CASP6 complex. Can be cleaved and activated by different caspases, depending on the context. Cleaved and activated by caspase-8 (CASP8) and subsequently by caspase-3 (CASP3). Can also undergo autoactivation by mediating autocleavage at Asp-162 and Asp-175, while it is not able to cleave its N-terminal disordered prodomain. Intramolecular cleavage at Asp-175 is a prerequisite for CASP6 self-activation. Cleaved and activated by CASP1 in neurons, possibly in the context of inflammation. Phosphorylation at Ser-239 inhibits autocleavage, preventing caspase activation. In terms of biological role, cysteine protease that plays essential roles in programmed cell death, axonal degeneration, development and innate immunity. Acts as a non-canonical executioner caspase during apoptosis: localizes in the nucleus and cleaves the nuclear structural protein NUMA1 and lamin A/LMNA thereby inducing nuclear shrinkage and fragmentation. Lamin-A/LMNA cleavage is required for chromatin condensation and nuclear disassembly during apoptotic execution. Acts as a regulator of liver damage by promoting hepatocyte apoptosis: in absence of phosphorylation by AMP-activated protein kinase (AMPK), catalyzes cleavage of BID, leading to cytochrome c release, thereby participating in nonalcoholic steatohepatitis. Cleaves PARK7/DJ-1 in cells undergoing apoptosis. Involved in intrinsic apoptosis by mediating cleavage of RIPK1. Furthermore, cleaves many transcription factors such as NF-kappa-B and cAMP response element-binding protein/CREBBP. Cleaves phospholipid scramblase proteins XKR4 and XKR9. In addition to apoptosis, involved in different forms of programmed cell death. Plays an essential role in defense against viruses by acting as a central mediator of the ZBP1-mediated pyroptosis, apoptosis, and necroptosis (PANoptosis), independently of its cysteine protease activity. PANoptosis is a unique inflammatory programmed cell death, which provides a molecular scaffold that allows the interactions and activation of machinery required for inflammasome/pyroptosis, apoptosis and necroptosis. Mechanistically, interacts with RIPK3 and enhances the interaction between RIPK3 and ZBP1, leading to ZBP1-mediated inflammasome activation and cell death. Plays an essential role in axon degeneration during axon pruning which is the remodeling of axons during neurogenesis but not apoptosis. Regulates B-cell programs both during early development and after antigen stimulation. Its function is as follows. (Microbial infection) Proteolytically cleaves the N protein of coronaviruses. The cleavage leads to two fragments and modulates coronavirus replication by regulating IFN signaling. The two fragments produced by the cleavage interact with IRF3 inhibiting its nuclear translocation after activation and reduce the expression of IFNB and IFN-stimulated genes. This is Caspase-6 from Mus musculus (Mouse).